The following is a 74-amino-acid chain: Acyl carrier protein (74 aa).

Positions 1 to 73 (MAVFEKVQEI…DLVAYVEEKT (73 aa)) constitute a Carrier domain. Position 35 is an O-(pantetheine 4'-phosphoryl)serine (serine 35).

The protein belongs to the acyl carrier protein (ACP) family. Post-translationally, 4'-phosphopantetheine is transferred from CoA to a specific serine of apo-ACP by AcpS. This modification is essential for activity because fatty acids are bound in thioester linkage to the sulfhydryl of the prosthetic group.

It is found in the cytoplasm. It participates in lipid metabolism; fatty acid biosynthesis. In terms of biological role, carrier of the growing fatty acid chain in fatty acid biosynthesis. The protein is Acyl carrier protein of Streptococcus thermophilus (strain CNRZ 1066).